Consider the following 184-residue polypeptide: Dual specificity protein phosphatase 22 (184 aa).

Gly-2 carries N-myristoyl glycine lipidation. The 141-residue stretch at 4–144 folds into the Tyrosine-protein phosphatase domain; sequence GMNKILPGLY…LQEFEKHEVH (141 aa). Ser-58 is modified (phosphoserine). Cys-88 (phosphocysteine intermediate) is an active-site residue. A protein contacts are provided by Leu-89, Ala-90, Val-92, Ser-93, and Arg-94.

This sequence belongs to the protein-tyrosine phosphatase family. Non-receptor class dual specificity subfamily. In terms of assembly, monomer. Interacts with LCK; the interaction is direct. Interacts with UBR2; the interaction is direct. In terms of processing, myristoylation regulates subcellular location, and is necessary for activation of JNK. In terms of tissue distribution, ubiquitous. Highest expression seen in heart, placenta, lung, liver, kidney and pancreas.

The protein localises to the cytoplasm. It carries out the reaction O-phospho-L-tyrosyl-[protein] + H2O = L-tyrosyl-[protein] + phosphate. The enzyme catalyses O-phospho-L-seryl-[protein] + H2O = L-seryl-[protein] + phosphate. The catalysed reaction is O-phospho-L-threonyl-[protein] + H2O = L-threonyl-[protein] + phosphate. Dual specificity phosphatase; can dephosphorylate both phosphotyrosine and phosphoserine or phosphothreonine residues. Activates the JNK signaling pathway. Inhibits T-cell receptor signaling and T-cell mediated immune responses, acting, at least in part, by inducing degradation of E3 ubiquitin ligase UBR2. Dephosphorylates and thereby induces 'Lys-48'-linked ubiquitination of UBR2, leading to proteasomal degradation of UBR2. Dephosphorylates and thereby inactivates tyrosine kinase LCK. Inhibits UBR2-mediated 'Lys-63'-linked ubiquitination of LCK. May play a role in B-cell receptor (BCR) signaling and B-cell function. The polypeptide is Dual specificity protein phosphatase 22 (DUSP22) (Homo sapiens (Human)).